The sequence spans 291 residues: ATP phosphoribosyltransferase (291 aa).

It belongs to the ATP phosphoribosyltransferase family. Long subfamily. The cofactor is Mg(2+).

It is found in the cytoplasm. It carries out the reaction 1-(5-phospho-beta-D-ribosyl)-ATP + diphosphate = 5-phospho-alpha-D-ribose 1-diphosphate + ATP. The protein operates within amino-acid biosynthesis; L-histidine biosynthesis; L-histidine from 5-phospho-alpha-D-ribose 1-diphosphate: step 1/9. Its activity is regulated as follows. Feedback inhibited by histidine. In terms of biological role, catalyzes the condensation of ATP and 5-phosphoribose 1-diphosphate to form N'-(5'-phosphoribosyl)-ATP (PR-ATP). Has a crucial role in the pathway because the rate of histidine biosynthesis seems to be controlled primarily by regulation of HisG enzymatic activity. This is ATP phosphoribosyltransferase from Geotalea daltonii (strain DSM 22248 / JCM 15807 / FRC-32) (Geobacter daltonii).